A 159-amino-acid polypeptide reads, in one-letter code: Protein phosphatase 1 regulatory subunit 17 (159 aa).

Disordered regions lie at residues 1–79 (MSTE…HIPP) and 98–127 (RIPK…PALH). Basic and acidic residues-rich tracts occupy residues 62 to 73 (SDQKKPRRKDTP) and 111 to 124 (SDME…KDTP). A phosphothreonine; by PKG/PRKG1 mark is found at Thr72 and Thr123.

Substrate for cGMP-dependent protein kinase. Phosphorylation of Thr-72 and Thr-123 is required for its phosphatase activity. Phosphorylated by PRKG1 isoform alpha. In terms of tissue distribution, expressed in Purkinje cells of the cerebellum, hippocampus, pons, medulla and eye.

In terms of biological role, inhibits phosphatase activities of protein phosphatase 1 (PP1) and protein phosphatase 2A (PP2A) complexes. This is Protein phosphatase 1 regulatory subunit 17 (Ppp1r17) from Mus musculus (Mouse).